Consider the following 146-residue polypeptide: D-aminoacyl-tRNA deacylase (146 aa).

The short motif at 137–138 (GP) is the Gly-cisPro motif, important for rejection of L-amino acids element.

The protein belongs to the DTD family. In terms of assembly, homodimer.

It is found in the cytoplasm. The enzyme catalyses glycyl-tRNA(Ala) + H2O = tRNA(Ala) + glycine + H(+). It carries out the reaction a D-aminoacyl-tRNA + H2O = a tRNA + a D-alpha-amino acid + H(+). An aminoacyl-tRNA editing enzyme that deacylates mischarged D-aminoacyl-tRNAs. Also deacylates mischarged glycyl-tRNA(Ala), protecting cells against glycine mischarging by AlaRS. Acts via tRNA-based rather than protein-based catalysis; rejects L-amino acids rather than detecting D-amino acids in the active site. By recycling D-aminoacyl-tRNA to D-amino acids and free tRNA molecules, this enzyme counteracts the toxicity associated with the formation of D-aminoacyl-tRNA entities in vivo and helps enforce protein L-homochirality. The sequence is that of D-aminoacyl-tRNA deacylase from Bacillus cereus (strain ATCC 14579 / DSM 31 / CCUG 7414 / JCM 2152 / NBRC 15305 / NCIMB 9373 / NCTC 2599 / NRRL B-3711).